A 446-amino-acid polypeptide reads, in one-letter code: DDB1- and CUL4-associated factor 12 (446 aa).

Residues 1–12 (MTRRAVSRKRRA) are compositionally biased toward basic residues. The segment at 1–33 (MTRRAVSRKRRAAPGTGPGEQSDWDHSAHKRKR) is disordered. 4 WD repeats span residues 132 to 173 (SHQS…PVCV), 177 to 215 (GHND…LSKS), 245 to 284 (PVNC…AKLL), and 333 to 370 (EQGS…FLED).

It belongs to the WD repeat DCAF12 family. Component of the DCX(DCAF12) E3 ubiquitin ligase complex, at least composed of cul4 (cul4a or cul4b), ddb1, dcaf12 and rbx1.

It localises to the cytoplasm. The protein localises to the cytoskeleton. The protein resides in the microtubule organizing center. Its subcellular location is the centrosome. It is found in the nucleus. It functions in the pathway protein modification; protein ubiquitination. In terms of biological role, substrate-recognition component of a DCX (DDB1-CUL4-X-box) E3 ubiquitin-protein ligase complex of the DesCEND (destruction via C-end degrons) pathway, which recognizes a C-degron located at the extreme C terminus of target proteins, leading to their ubiquitination and degradation. The C-degron recognized by the DesCEND pathway is usually a motif of less than ten residues and can be present in full-length proteins, truncated proteins or proteolytically cleaved forms. The DCX(DCAF12) complex specifically recognizes proteins with a diglutamate (Glu-Glu) at the C-terminus leading to their ubiquitination and degradation. Also directly recognizes the C-terminal glutamate-leucine (Glu-Leu) degron as an alternative degron in proteins leading to their ubiquitination and degradation. This is DDB1- and CUL4-associated factor 12 from Xenopus tropicalis (Western clawed frog).